Reading from the N-terminus, the 883-residue chain is Alanine--tRNA ligase (883 aa).

4 residues coordinate Zn(2+): H565, H569, C675, and H679.

It belongs to the class-II aminoacyl-tRNA synthetase family. Zn(2+) serves as cofactor.

It localises to the cytoplasm. It catalyses the reaction tRNA(Ala) + L-alanine + ATP = L-alanyl-tRNA(Ala) + AMP + diphosphate. Functionally, catalyzes the attachment of alanine to tRNA(Ala) in a two-step reaction: alanine is first activated by ATP to form Ala-AMP and then transferred to the acceptor end of tRNA(Ala). Also edits incorrectly charged Ser-tRNA(Ala) and Gly-tRNA(Ala) via its editing domain. The sequence is that of Alanine--tRNA ligase from Rhodospirillum rubrum (strain ATCC 11170 / ATH 1.1.1 / DSM 467 / LMG 4362 / NCIMB 8255 / S1).